Reading from the N-terminus, the 193-residue chain is uncharacterized protein (193 aa).

This is an uncharacterized protein from Dictyostelium discoideum (Social amoeba).